The following is a 481-amino-acid chain: F-box/FBD/LRR-repeat protein At5g18770 (481 aa).

Residues 23-69 (EDMISALPDHLLCHILIFLSTDESVLTSVLSSRWRNLWKWVPRLDLN) form the F-box domain. LRR repeat units lie at residues 126–153 (KPNV…TLSA), 159–185 (CLKL…YLED), 186–211 (VVFP…KLSL), 214–234 (DDVV…TLKR), 236–261 (VPVY…SLID), 289–314 (DELS…TISW), and 340–368 (ATMS…HFTL). An FBD domain is found at 378-430 (VITGFSRVLPRCLVFSLESVEMESPITEKATELKLVRYFLENSATLKKLVLLL).

The polypeptide is F-box/FBD/LRR-repeat protein At5g18770 (Arabidopsis thaliana (Mouse-ear cress)).